The primary structure comprises 570 residues: NADPH oxidase 2 (570 aa).

Residues 2–9 (GNWAVNEG) lie on the Cytoplasmic side of the membrane. A helical membrane pass occupies residues 10–36 (LSIFVILVWLGLNVFLFVWYYRVYDIP). Residues 37-46 (PKFFYTRKLL) are Extracellular-facing. The chain crosses the membrane as a helical span at residues 47 to 72 (GSALALARAPAACLNFNCMLILLPVC). The region spanning 54–286 (RAPAACLNFN…MFLYLCERLV (233 aa)) is the Ferric oxidoreductase domain. Residues 73-95 (RNLLSFLRGSSACCSTRVRRQLD) are Cytoplasmic-facing. The helical transmembrane segment at 96 to 130 (RNLTFHKMVAWMIALHSAIHTIAHLFNVEWCVNAR) threads the bilayer. Residues His-101 and His-115 each coordinate heme b. At 131–163 (VNNSDPYSVALSELGDRQNESYLNFARKRIKNP) the chain is on the extracellular side. Residues Asn-132 and Asn-149 are each glycosylated (N-linked (GlcNAc...) asparagine). Residue Lys-161 forms a Glycyl lysine isopeptide (Lys-Gly) (interchain with G-Cter in ubiquitin) linkage. A helical membrane pass occupies residues 164–194 (EGGLYLAVTLLAGITGVVITLCLILIITSST). The Cytoplasmic segment spans residues 195–203 (KTIRRSYFE). The FAD site is built by Arg-199 and Ser-200. Residues 204–222 (VFWYTHHLFVIFFIGLAIH) traverse the membrane as a helical segment. Positions 206, 209, 222, 226, and 227 each coordinate heme b. Residues 223 to 267 (GAERIVRGQTAESLAVHNITVCEQKISEWGKIKECPIPQFAGNPP) are Extracellular-facing. Asn-240 carries an N-linked (GlcNAc...) asparagine glycan. Lys-255 participates in a covalent cross-link: Glycyl lysine isopeptide (Lys-Gly) (interchain with G-Cter in ubiquitin). Heme b contacts are provided by Met-268, Tyr-280, and Arg-287. The chain crosses the membrane as a helical span at residues 268–285 (MTWKWIVGPMFLYLCERL). At 286-570 (VRFWRSQQKV…VHFIFNKENF (285 aa)) the chain is on the cytoplasmic side. The FAD-binding FR-type domain occupies 287-397 (RFWRSQQKVV…DGPFGTASED (111 aa)). Residues Lys-294, Lys-299, Lys-306, Lys-328, and Lys-334 each participate in a glycyl lysine isopeptide (Lys-Gly) (interchain with G-Cter in ubiquitin) cross-link. Residues Trp-337, His-338, Pro-339, Thr-341, His-354, Arg-356, Trp-361, and Thr-362 each coordinate FAD. Lys-381 participates in a covalent cross-link: Glycyl lysine isopeptide (Lys-Gly) (interchain with G-Cter in ubiquitin). NADPH is bound by residues Ile-411, Arg-446, and Thr-481. Lys-506 is covalently cross-linked (Glycyl lysine isopeptide (Lys-Gly) (interchain with G-Cter in ubiquitin)). Arg-513 is a binding site for NADPH. Residue Lys-567 forms a Glycyl lysine isopeptide (Lys-Gly) (interchain with G-Cter in ubiquitin) linkage.

In terms of assembly, component of the phagocyte NADPH oxidase core complex/cytochrome b558 complex, composed of CYBB (heavy chain (beta)) and CYBA (light chain (alpha)). Component of the phagocyte NADPH oxidase complex composed of an obligatory core heterodimer formed by the membrane proteins CYBA and CYBB and the cytosolic regulatory subunits NCF1/p47-phox, NCF2/p67-phox, NCF4/p40-phox and the small GTPase RAC1 or RAC2. Interacts with NCF1 (phosphorylated form). Interacts with NCF2; the interaction is enhanced in the presence of GBP7. Interacts with RAC2. Interacts with RAC1. Interacts with calprotectin (S100A8/9). Interacts with NRROS; the interaction is direct and impairs formation of a stable NADPH oxidase complex. Interacts with CYBC1; CYBC1 may act as a chaperone stabilizing Cytochrome b-245 heterodimer. The CYBA-CYBB complex interacts with GBP7. The cofactor is FAD. Glycosylated. Post-translationally, phosphorylated on Ser and Thr residues by PKC during neutrophils activation. Phosphorylation enhances the NADPH oxidase activity and stimulates its interaction with RAC2, NCF2/p67-phox, and NCF1/p47-phox. In terms of processing, undergoes 'Lys-48'-linked polyubiquitination, likely by RNF145, triggering endoplasmic reticulum-associated degradation. As to expression, detected in neutrophils (at protein level).

The protein resides in the cell membrane. The enzyme catalyses NADPH + 2 O2 = 2 superoxide + NADP(+) + H(+). Its function is as follows. Catalytic subunit of the phagocyte NADPH oxidase complex that mediates the transfer of electrons from cytosolic NADPH to O2 to produce the superoxide anion (O2(-)). In the activated complex, electrons are first transferred from NADPH to flavin adenine dinucleotide (FAD) and subsequently transferred via two heme molecules to molecular oxygen, producing superoxide through an outer-sphere reaction. Activation of the NADPH oxidase complex is initiated by the assembly of cytosolic subunits of the NADPH oxidase complex with the core NADPH oxidase complex to form a complex at the plasma membrane or phagosomal membrane. This activation process is initiated by phosphorylation dependent binding of the cytosolic NCF1/p47-phox subunit to the C-terminus of CYBA/p22-phox. NADPH oxidase complex assembly is impaired through interaction with NRROS. This chain is NADPH oxidase 2, found in Homo sapiens (Human).